Reading from the N-terminus, the 963-residue chain is Copalyl diphosphate synthase (963 aa).

A type II terpene cyclase (TC) region spans residues 1 to 539 (MSPMDLQESA…EAYILAALKR (539 aa)). The substrate binding stretch occupies residues 227 to 292 (ATQWDDECED…FIEKIRSYLH (66 aa)). Residues D311 and D314 each coordinate Mg(2+). The DXDD motif lies at 311-314 (DADD). Residues 333 to 341 (AMLKEFEEE) carry the NSE/DTE motif. Substrate is bound by residues 337–341 (EFEEE) and 521–522 (VT). Residues 540-659 (AADLPDENAE…SVSVHTDHSD (120 aa)) form a linker region. A compositionally biased stretch (polar residues) spans 627 to 648 (TNGHYVNGTNHETPLTNGISNG). A disordered region spans residues 627 to 657 (TNGHYVNGTNHETPLTNGISNGDSVSVHTDH). The interval 660-963 (SYYQRSDWTA…KILARMSLEL (304 aa)) is geranylfarnesyl diphosphate synthase (PT). Isopentenyl diphosphate contacts are provided by K688, R691, and H720. D727 and D731 together coordinate Mg(2+). The DDXXD 1 signature appears at 727 to 731 (DDIQD). R736 lines the dimethylallyl diphosphate pocket. R737 is a binding site for isopentenyl diphosphate. Dimethylallyl diphosphate is bound by residues K814, T815, Q848, N855, K865, and K875. The short motif at 851-855 (DDYLN) is the DDXXD 2 element.

This sequence in the N-terminal section; belongs to the terpene synthase family. The protein in the C-terminal section; belongs to the FPP/GGPP synthase family. Homohexamer. It depends on Mg(2+) as a cofactor.

It carries out the reaction isopentenyl diphosphate + (2E,6E)-farnesyl diphosphate = (2E,6E,10E)-geranylgeranyl diphosphate + diphosphate. The catalysed reaction is (2E,6E,10E)-geranylgeranyl diphosphate = (+)-copalyl diphosphate. Its function is as follows. Bifunctional terpene synthase that possesses both prenyltransferase and type II terpene cyclase activity, converting isopentenyl diphosphate (IPP) and dimethylallyl diphosphate (DMAPP) into geranylgeranyl diphosphate (GGPP) and further converting GGPP into copalyl diphosphate, respectively. The chain is Copalyl diphosphate synthase from Talaromyces verruculosus (Penicillium verruculosum).